Consider the following 626-residue polypeptide: Nuclear receptor subfamily 4 group A member 3 (626 aa).

Residues 1-108 (MPCVQAQYSP…HHHHHHHHHH (108 aa)) form an activation function (AF)-1 domain region. Positions 1–138 (MPCVQAQYSP…PSTSMYFKQS (138 aa)) are required for DNA-PK heterotrimer. The interaction with NCOA1, NCOA2, NCOA3 and KAT2B stretch occupies residues 1–291 (MPCVQAQYSP…SRSSSSGEGT (291 aa)). 3 disordered regions span residues 92–152 (PSYH…PPQA), 192–211 (HFKP…GHHL), and 265–284 (PTAS…PSRS). The segment covering 93 to 110 (SYHHHHHHHHHHHHHHQQ) has biased composition (basic residues). Composition is skewed to pro residues over residues 140-149 (PSTPTTPAFP) and 195-204 (PSPPHPPAPS). Low complexity predominate over residues 268-284 (SSLLGESPSLPSPPSRS). Positions 289-364 (EGTCAVCGDN…VGMVKEVVRT (76 aa)) form a DNA-binding region, nuclear receptor. NR C4-type zinc fingers lie at residues 292 to 312 (CAVC…CEGC) and 328 to 352 (CLAN…FQKC). A disordered region spans residues 364–394 (TDSLKGRRGRLPSKPKSPLQQEPSQPSPPSP). Residues 377–387 (KPKSPLQQEPS) show a composition bias toward low complexity. The segment at 379–626 (KSPLQQEPSQ…DKLFLDTLPF (248 aa)) is interaction with KAT2B. Residues 394–623 (PPICMMNALV…SIIDKLFLDT (230 aa)) form the NR LBD domain.

The protein belongs to the nuclear hormone receptor family. NR4 subfamily. As to quaternary structure, interacts with SIX3 (via homeobox); differentially regulates the transcriptional activities of NR4A3. Interacts with the constituents of DNA-PK heterotrimer PRKDC, XRCC6 and XRCC5; phosphorylates and prevents NR4A3 ubiquitinylation and degradation. Interacts with NCOA2; potentiates the activity of the NR4A3. Interacts with NCOA1, NCOA3, MED1 and KAT2B. Interacts with EP300 and NCOA2; mediates the recruitment of MED1 in the coactivator complex. Interacts with NR3C1 (via nuclear receptor DNA-binding domain); the interactions represses transcription activity of NR4A3 on the POMC promoter Nur response element (NurRE). Interacts with TRIM28; the interactions potentiates NR4A3 activity on NurRE promoter. Binds DNA as a monomer and homodimer. Interacts with PARP1; activates PARP1 by improving acetylation of PARP1 and suppressing the interaction between PARP1 and SIRT1. Phosphorylated by PRKDC. As to expression, isoform alpha is highly expressed in skeletal muscle. Isoform beta is highly expressed in skeletal muscle and low expressed in fetal brain and placenta.

It is found in the nucleus. Its function is as follows. Transcriptional activator that binds to regulatory elements in promoter regions in a cell- and response element (target)-specific manner. Induces gene expression by binding as monomers to the NR4A1 response element (NBRE) 5'-AAAAGGTCA-3' site and as homodimers to the Nur response element (NurRE) site in the promoter of their regulated target genes. Plays a role in the regulation of proliferation, survival and differentiation of many different cell types and also in metabolism and inflammation. Mediates proliferation of vascular smooth muscle, myeloid progenitor cell and type B pancreatic cells; promotes mitogen-induced vascular smooth muscle cell proliferation through transactivation of SKP2 promoter by binding a NBRE site. Upon PDGF stimulation, stimulates vascular smooth muscle cell proliferation by regulating CCND1 and CCND2 expression. In islets, induces type B pancreatic cell proliferation through up-regulation of genes that activate cell cycle, as well as genes that cause degradation of the CDKN1A. Negatively regulates myeloid progenitor cell proliferation by repressing RUNX1 in a NBRE site-independent manner. During inner ear, plays a role as a key mediator of the proliferative growth phase of semicircular canal development. Also mediates survival of neuron and smooth muscle cells; mediates CREB-induced neuronal survival, and during hippocampus development, plays a critical role in pyramidal cell survival and axonal guidance. Is required for S phase entry of the cell cycle and survival of smooth muscle cells by inducing CCND1, resulting in RB1 phosphorylation. Binds to NBRE motif in CCND1 promoter, resulting in the activation of the promoter and CCND1 transcription. Also plays a role in inflammation; upon TNF stimulation, mediates monocyte adhesion by inducing the expression of VCAM1 and ICAM1 by binding to the NBRE consensus site. In mast cells activated by Fc-epsilon receptor cross-linking, promotes the synthesis and release of cytokines but impairs events leading to degranulation. Also plays a role in metabolism; by modulating feeding behavior; and by playing a role in energy balance by inhibiting the glucocorticoid-induced orexigenic neuropeptides AGRP expression, at least in part by forming a complex with activated NR3C1 on the AGRP- glucocorticoid response element (GRE), and thus weakening the DNA binding activity of NR3C1. Upon catecholamines stimulation, regulates gene expression that controls oxidative metabolism in skeletal muscle. Plays a role in glucose transport by regulating translocation of the SLC2A4 glucose transporter to the cell surface. Finally, during gastrulation plays a crucial role in the formation of anterior mesoderm by controlling cell migration. Inhibits adipogenesis. Also participates in cardiac hypertrophy by activating PARP1. The chain is Nuclear receptor subfamily 4 group A member 3 (NR4A3) from Homo sapiens (Human).